Consider the following 519-residue polypeptide: Zinc finger and BTB domain-containing protein 18.3 (519 aa).

The BTB domain maps to 24-91 (CDCTVLVGDA…MYEGKLQFKD (68 aa)). The disordered stretch occupies residues 189–227 (ASIPQTGGEVDTHTTAAGKTADSPCSSTGSLSHRSATSM). Residues 201–227 (HTTAAGKTADSPCSSTGSLSHRSATSM) show a composition bias toward polar residues. 4 C2H2-type zinc fingers span residues 367-389 (FMCP…LSTH), 407-429 (PTCS…ERTH), 435-457 (FTCT…AVVH), and 463-486 (HACK…RKFH).

It belongs to the krueppel C2H2-type zinc-finger protein family. ZBTB18 subfamily.

It is found in the nucleus. Its function is as follows. Transcriptional repressor that plays a role in various developmental processes. Specifically binds the consensus DNA sequence 5'-[AC]ACATCTG[GT][AC]-3' which contains the E box core, and acts by recruiting chromatin remodeling multiprotein complexes. This Xenopus laevis (African clawed frog) protein is Zinc finger and BTB domain-containing protein 18.3 (zbtb18.3).